A 194-amino-acid chain; its full sequence is Cysteine and glycine-rich protein 3 (194 aa).

An interaction with TCAP region spans residues 1–5 (MPNWG). Residues 10-61 (CGACEKTVYHAEEIQCNGRSFHKTCFHCMACRKALDSTTVAAHESEIYCKVC) enclose the LIM zinc-binding 1 domain. A Nuclear localization signal motif is present at residues 64–69 (RRYGPK). The segment at 94–105 (QSPKPARSVTTS) is interaction with CLF2 and isoform 2. Phosphoserine is present on residues serine 95 and serine 153. Positions 120–171 (CPRCGKSVYAAEKVMGGGKPWHKTCFRCAICGKSLESTNVTDKDGELYCKVC) constitute an LIM zinc-binding 2 domain.

Self-associates. Oligomeric in the cytoplasm and monomeric in the nucleus. Homooligomers preferentially form along the actin cytoskeleton. Isoform 2 interacts with isoform 1. Isoform 1 but not isoform 2 interacts with MYOD1 and MYOG. Isoform 1 interacts with TCAP, ACTN2 and NRAP. Isoform 2 interacts with TCAP and alpha-actinin. Interacts with LDHD. Interacts (via N-terminus)with GLRX3 (via C-terminus) and PPP3CA; GLRX3 and calcineurin compete for interaction with CSRP3. Interacts with MYF6. Interacts with CFL2; the stoichiometry influences F-actin depolymerization and possibly two molecules of CFL2 can interact with one molecule of CSRP3 resulting in the highest functional impact; the interaction is stronger with phosphorylated CFL2. Post-translationally, phosphorylated by PKC/PRKCA. As to expression, cardiac and slow-twitch skeletal muscles. Isoform 2 is expressed in striated muscle. Isoform 2 is specifically expressed at higher levels in patients with neuromuscular diseases, such as limb-girdle muscular dystrophy 2A (LGMD2A), Duchenne muscular dystrophy (DMD) and dermatomyositis.

It localises to the nucleus. Its subcellular location is the cytoplasm. It is found in the cytoskeleton. The protein localises to the myofibril. The protein resides in the sarcomere. It localises to the z line. In terms of biological role, positive regulator of myogenesis. Acts as a cofactor for myogenic bHLH transcription factors such as MYOD1, and probably MYOG and MYF6. Enhances the DNA-binding activity of the MYOD1:TCF3 isoform E47 complex and may promote formation of a functional MYOD1:TCF3 isoform E47:MEF2A complex involved in myogenesis. Plays a crucial and specific role in the organization of cytosolic structures in cardiomyocytes. Could play a role in mechanical stretch sensing. May be a scaffold protein that promotes the assembly of interacting proteins at Z-line structures. It is essential for calcineurin anchorage to the Z line. Required for stress-induced calcineurin-NFAT activation. The role in regulation of cytoskeleton dynamics by association with CFL2 is reported conflictingly: Shown to enhance CFL2-mediated F-actin depolymerization dependent on the CSRP3:CFL2 molecular ratio, and also shown to reduce the ability of CLF1 and CFL2 to enhance actin depolymerization. Proposed to contribute to the maintenance of muscle cell integrity through an actin-based mechanism. Can directly bind to actin filaments, cross-link actin filaments into bundles without polarity selectivity and protect them from dilution- and cofilin-mediated depolymerization; the function seems to involve its self-association. In vitro can inhibit PKC/PRKCA activity. Proposed to be involved in cardiac stress signaling by down-regulating excessive PKC/PRKCA signaling. May play a role in early sarcomere organization. Overexpression in myotubes negatively regulates myotube differentiation. By association with isoform 1 and thus changing the CSRP3 isoform 1:CFL2 stoichiometry is proposed to down-regulate CFL2-mediated F-actin depolymerization. The polypeptide is Cysteine and glycine-rich protein 3 (CSRP3) (Homo sapiens (Human)).